A 431-amino-acid polypeptide reads, in one-letter code: GDP-L-galactose phosphorylase 2 (431 aa).

His235 (tele-GMP-histidine intermediate) is an active-site residue. The span at 398–407 (EEEEEEELEE) shows a compositional bias: acidic residues. The segment at 398–417 (EEEEEEELEEQNSMNGGSFT) is disordered.

This sequence belongs to the GDPGP1 family. As to quaternary structure, interacts with TLP1. As to expression, expressed in leaves, stems, roots, flowers and siliques.

It is found in the cytoplasm. It localises to the nucleus. It catalyses the reaction GDP-beta-L-galactose + phosphate = beta-L-galactose 1-phosphate + GDP + H(+). It functions in the pathway cofactor biosynthesis; L-ascorbate biosynthesis via GDP-alpha-D-mannose pathway; L-ascorbate from GDP-alpha-D-mannose: step 2/5. Functionally, catalyzes a reaction of the Smirnoff-Wheeler pathway, the major route to ascorbate biosynthesis in plants. Acts as a phosphorylase rather than as a transferase. Uses preferentially GDP-L-galactose and GDP-D-glucose as substrates. Lower activity with GDP-L-fucose, very low activity with GDP-D-mannose, and no activity with UDP-D-glucose, UDP-D-galactose or ADP-D-glucose. Highly specific for inorganic phosphate as the guanylyl acceptor. The chain is GDP-L-galactose phosphorylase 2 (VTC5) from Arabidopsis thaliana (Mouse-ear cress).